A 387-amino-acid chain; its full sequence is Chaperone protein DnaJ (387 aa).

The region spanning 5 to 70 (DYYEVLGVAK…QKRAAYDRFG (66 aa)) is the J domain. The CR-type zinc-finger motif lies at 140 to 218 (GKTETIRLPT…CGGAGRVTRE (79 aa)). Zn(2+)-binding residues include Cys153, Cys156, Cys170, Cys173, Cys192, Cys195, Cys206, and Cys209. 4 CXXCXGXG motif repeats span residues 153–160 (CEVCAGSG), 170–177 (CPTCGGYG), 192–199 (CPNCQGRG), and 206–213 (CAACGGAG).

Belongs to the DnaJ family. As to quaternary structure, homodimer. It depends on Zn(2+) as a cofactor.

It is found in the cytoplasm. Functionally, participates actively in the response to hyperosmotic and heat shock by preventing the aggregation of stress-denatured proteins and by disaggregating proteins, also in an autonomous, DnaK-independent fashion. Unfolded proteins bind initially to DnaJ; upon interaction with the DnaJ-bound protein, DnaK hydrolyzes its bound ATP, resulting in the formation of a stable complex. GrpE releases ADP from DnaK; ATP binding to DnaK triggers the release of the substrate protein, thus completing the reaction cycle. Several rounds of ATP-dependent interactions between DnaJ, DnaK and GrpE are required for fully efficient folding. Also involved, together with DnaK and GrpE, in the DNA replication of plasmids through activation of initiation proteins. In Methylobacterium sp. (strain 4-46), this protein is Chaperone protein DnaJ.